We begin with the raw amino-acid sequence, 941 residues long: Pre-mRNA-processing factor 6 (941 aa).

Residues 1 to 79 (MNKKKKPFLG…DEDLNDTNYD (79 aa)) form a disordered region. The span at 39–65 (DANDPVDDRHAPPGKRTVGDQMKKNQA) shows a compositional bias: basic and acidic residues. Residues 66–78 (ADDDDEDLNDTNY) are compositionally biased toward acidic residues. Serine 143 is subject to Phosphoserine. Phosphothreonine occurs at positions 180, 266, and 275. Position 279 is a phosphoserine (serine 279). HAT repeat units follow at residues 384–416 (TDIRAKKRVLRKALEHVPNSVRLWKAAVELEEP), 418–444 (DARIMLSRAVECCPTSVELWLALARLE), 445–476 (TYENARKVLNKARENIPTDRHIWITAAKLEEA), 554–586 (NALECARAIYAYALQVFPSKKSVWLRAAYFEKN), 588–620 (GTRESLEALLQRAVAHCPKAEVLWLMGAKSKWL), 622–654 (GDVPAARSILALAFQANPNSEEIWLAAVKLESE), 689–721 (GNISAAQELCEEALRHYEDFPKLWMMKGQIEEQ), 723–755 (ELMEKAREAYNQGLKKCPHSTPLWLLLSRLEEK), and 855–887 (RKITKAREWFHRTVKIDSDLGDAWAFFYKFELQ).

As to quaternary structure, identified in the spliceosome B complex. Identified in the spliceosome C complex. Associates with the U5 snRNP particle. Component of the U4/U6-U5 tri-snRNP complex composed of the U4, U6 and U5 snRNAs and at least PRPF3, PRPF4, PRPF6, PRPF8, PRPF31, SNRNP200, TXNL4A, SNRNP40, DDX23, CD2BP2, PPIH, SNU13, EFTUD2, SART1 and USP39, LSm proteins LSm2-8 and Sm proteins. Interacts with ARAF1. Interacts with AR and NR3C1, but not ESR1, independently of the presence of hormones. Interacts with USH1G. Post-translationally, phosphorylated by PRP4K during spliceosome assembly.

Its subcellular location is the nucleus. The protein resides in the nucleoplasm. It is found in the nucleus speckle. In terms of biological role, involved in pre-mRNA splicing as component of the U4/U6-U5 tri-snRNP complex, one of the building blocks of the spliceosome. Enhances dihydrotestosterone-induced transactivation activity of AR, as well as dexamethasone-induced transactivation activity of NR3C1, but does not affect estrogen-induced transactivation. The chain is Pre-mRNA-processing factor 6 (Prpf6) from Mus musculus (Mouse).